A 178-amino-acid polypeptide reads, in one-letter code: Large ribosomal subunit protein uL16 (178 aa).

This sequence belongs to the universal ribosomal protein uL16 family.

The chain is Large ribosomal subunit protein uL16 from Saccharolobus islandicus (strain Y.N.15.51 / Yellowstone #2) (Sulfolobus islandicus).